The following is a 279-amino-acid chain: Protease HtpX homolog (279 aa).

2 helical membrane-spanning segments follow: residues 6–26 (VFVLMAGLTGLVVAIGQALGG) and 29–49 (GAILALLLSAGMNLFMYWGSS). Histidine 130 is a binding site for Zn(2+). The active site involves glutamate 131. Histidine 134 contacts Zn(2+). Transmembrane regions (helical) follow at residues 145–165 (IAATMAGAVSNLAQFAFFFGG) and 176–196 (VAGIAMLIIGPIVAMVIQFAI). A Zn(2+)-binding site is contributed by glutamate 201.

It belongs to the peptidase M48B family. It depends on Zn(2+) as a cofactor.

The protein resides in the cell inner membrane. In Gemmatimonas aurantiaca (strain DSM 14586 / JCM 11422 / NBRC 100505 / T-27), this protein is Protease HtpX homolog.